We begin with the raw amino-acid sequence, 693 residues long: MSGETEIDDPEVSDGASENDYSDHEQELDVIGKEGDNQEMAEQKVRPDGEENGNTVGATATVTKPKFDPKDPLRPRRKKARRACFACQRAHLTCGDERPCQRCIKRGLADACQDGVRKKAKYLHDAPPEALRPVLGPTYNQQVSSNRATAASTPTEPSPGMGNFFSQPDTSPSYPLFGANQQGQMPPPLQNRLSFGSNQPSPISPTFHTAGNRPAGMQGISLPQVSNDSHSAFGGGAFFDPSNPALFNFDLEGLNFGNHYGALEFGMLGHMASGSAETPPQDSSAGMPQNVGDLGFSNNSAFTNNPPFNQIYSHDSLPDFAVGLDRPNGGNVFGNNNPHHGLPHAYAIATSGSQHSPSTDASPAASTMGFESSPTTTNYPAPASHRPAKRQDTKSGPSGKLGPSGILGKRNRDPSSIYDTVHEPYSYTTGFHSLTAFIQKRFSPNKTLRIAKSLASIRPSFISCTKTLNRQDLIFMEKCFQRTLFEYEDFMLNCCTPTVVCRRTGEIAAANKEFTLLTGWRKEVLLGNEANLNTNTGSGGPPSSGSSGRGSFTTPRMRPVNLADSNPNGKTQPIFLAELLDDDSVIEFYEDFARLAFGDSRGSVTTRYKLLRYQTAKDTSQSPEGDKGKRKDIVGFNGAGIGGMGNRIKEIDANNGIESLQQDGKVDCSSCWTIKRDVFDIPMLIVMNFLPCI.

Residues 1 to 12 (MSGETEIDDPEV) are compositionally biased toward acidic residues. A disordered region spans residues 1-75 (MSGETEIDDP…KFDPKDPLRP (75 aa)). The span at 21–49 (YSDHEQELDVIGKEGDNQEMAEQKVRPDG) shows a compositional bias: basic and acidic residues. Residues 52–62 (NGNTVGATATV) are compositionally biased toward polar residues. The span at 65–74 (PKFDPKDPLR) shows a compositional bias: basic and acidic residues. The zn(2)-C6 fungal-type DNA-binding region spans 84 to 112 (CFACQRAHLTCGDERPCQRCIKRGLADAC). Polar residues-rich tracts occupy residues 144 to 155 (SSNRATAASTPT) and 275 to 287 (SAET…SAGM). Disordered stretches follow at residues 144–170 (SSNR…QPDT), 273–299 (SGSA…FSNN), 350–413 (TSGS…RNRD), and 531–567 (NLNT…DSNP). Residues 356–367 (SPSTDASPAAST) show a composition bias toward low complexity. The segment covering 369–379 (GFESSPTTTNY) has biased composition (polar residues). A compositionally biased stretch (low complexity) spans 394 to 408 (KSGPSGKLGPSGILG).

The protein belongs to the ERT1/acuK family.

It is found in the nucleus. In terms of biological role, transcription factor which regulates nonfermentable carbon utilization. Activator of gluconeogenetic genes. This chain is Transcription activator of gluconeogenesis BC1G_14637, found in Botryotinia fuckeliana (strain B05.10) (Noble rot fungus).